The following is a 503-amino-acid chain: Anhydrotetracycline monooxygenase (503 aa).

This sequence belongs to the PheA/TfdB FAD monooxygenase family. It depends on FAD as a cofactor.

It carries out the reaction anhydrotetracycline + NADPH + O2 + H(+) = 5a,11a-dehydrotetracycline + NADP(+) + H2O. It participates in antibiotic biosynthesis; oxytetracycline biosynthesis. Its function is as follows. Catalyzes hydroxylation of the anthracycline structure at position C-6 during the biosynthesis of oxytetracyline. In Streptomyces rimosus, this protein is Anhydrotetracycline monooxygenase.